Reading from the N-terminus, the 310-residue chain is UDP-N-acetylenolpyruvoylglucosamine reductase (310 aa).

Positions 27–192 (KIGGKARYIV…LKATFRLQYA (166 aa)) constitute an FAD-binding PCMH-type domain. Arg-171 is an active-site residue. The active-site Proton donor is the Ser-223. The active site involves Glu-293.

This sequence belongs to the MurB family. The cofactor is FAD.

Its subcellular location is the cytoplasm. It carries out the reaction UDP-N-acetyl-alpha-D-muramate + NADP(+) = UDP-N-acetyl-3-O-(1-carboxyvinyl)-alpha-D-glucosamine + NADPH + H(+). It participates in cell wall biogenesis; peptidoglycan biosynthesis. Its function is as follows. Cell wall formation. In Caldicellulosiruptor saccharolyticus (strain ATCC 43494 / DSM 8903 / Tp8T 6331), this protein is UDP-N-acetylenolpyruvoylglucosamine reductase.